The sequence spans 313 residues: GTP cyclohydrolase MptA (313 aa).

It belongs to the GTP cyclohydrolase IV family. As to quaternary structure, homodimer. Fe(2+) serves as cofactor.

It carries out the reaction GTP + H2O = 7,8-dihydroneopterin 2',3'-cyclic phosphate + formate + diphosphate + H(+). Its pathway is cofactor biosynthesis; 5,6,7,8-tetrahydromethanopterin biosynthesis. Inhibited by GTP concentrations greater than 0.3 mM and by 2-amino-5-formylamino-6-ribofuranosylamino-4(3H)-pyrimidinone 5'-phosphate (fapyGMP). Partial inhibition is observed when 2 mM GMP, dGTP, or 7-methyl-GTP was included along with 2 mM GTP. Functionally, converts GTP to 7,8-dihydro-D-neopterin 2',3'-cyclic phosphate, the first intermediate in the biosynthesis of coenzyme methanopterin. It is also able to utilize a variety of GTP analogs as substrates, including GDP, beta,gamma-methylene-GTP and GTP-[gamma-thio]. In Methanocaldococcus jannaschii (strain ATCC 43067 / DSM 2661 / JAL-1 / JCM 10045 / NBRC 100440) (Methanococcus jannaschii), this protein is GTP cyclohydrolase MptA (mptA).